A 710-amino-acid polypeptide reads, in one-letter code: Polyribonucleotide nucleotidyltransferase (710 aa).

Mg(2+) contacts are provided by D489 and D495. The region spanning 556-615 is the KH domain; sequence PKIDTIKIDVDKIKVVIGKGGETIDKIIAETGVKIDIDDEGNVSIYSSDQAAIDRTKEII. One can recognise an S1 motif domain in the interval 625 to 693; the sequence is GEVYHAKVIR…EKGRVDASMK (69 aa).

Belongs to the polyribonucleotide nucleotidyltransferase family. Mg(2+) is required as a cofactor.

Its subcellular location is the cytoplasm. It carries out the reaction RNA(n+1) + phosphate = RNA(n) + a ribonucleoside 5'-diphosphate. Its function is as follows. Involved in mRNA degradation. Catalyzes the phosphorolysis of single-stranded polyribonucleotides processively in the 3'- to 5'-direction. The polypeptide is Polyribonucleotide nucleotidyltransferase (Streptococcus pyogenes serotype M3 (strain ATCC BAA-595 / MGAS315)).